We begin with the raw amino-acid sequence, 302 residues long: Surfeit locus protein 4 homolog (302 aa).

6 consecutive transmembrane segments (helical) span residues 95–115 (APLL…LVVF), 120–140 (AYAI…YGLI), 193–213 (VLLI…ISWT), 215–235 (ILVH…FKAK), 236–256 (FFAA…NSFW), and 271–291 (DFFQ…TGPG). The Di-lysine motif motif lies at 299–302 (KKIY).

The protein belongs to the SURF4 family.

It is found in the endoplasmic reticulum membrane. In Schizosaccharomyces pombe (strain 972 / ATCC 24843) (Fission yeast), this protein is Surfeit locus protein 4 homolog.